A 315-amino-acid polypeptide reads, in one-letter code: Olfactory receptor 5M10 (315 aa).

The Extracellular portion of the chain corresponds to 1–25 (MLSPNHTIVTEFILLGLTDDPVLEK). Asn5 carries N-linked (GlcNAc...) asparagine glycosylation. A helical membrane pass occupies residues 26 to 46 (ILFGVFLAIYLITLAGNLCMI). Over 47–54 (LLIRTNSQ) the chain is Cytoplasmic. Residues 55-75 (LQTPMYFFLGHLSFVDICYSS) form a helical membrane-spanning segment. Topologically, residues 76-99 (NVTPNMLHNFLSEQKTISYAGCFT) are extracellular. An intrachain disulfide couples Cys97 to Cys189. Residues 100–120 (QCLLFIALVITEFYFLASMAL) traverse the membrane as a helical segment. Residues 121 to 139 (DRYVAICSPLHYSSRMSKN) are Cytoplasmic-facing. Residues 140–160 (ICISLVTVPYMYGFLNGLSQT) form a helical membrane-spanning segment. The Extracellular portion of the chain corresponds to 161–196 (LLTFHLSFCGSLEINHFYCADPPLIMLACSDTRVKK). A helical membrane pass occupies residues 197–217 (MAMFVVAGFTLSSSLFIILLS). Residues 218 to 237 (YLFIFAAIFRIRSAEGRHKA) lie on the Cytoplasmic side of the membrane. Residues 238–258 (FSTCASHLTIVTLFYGTLFCM) traverse the membrane as a helical segment. The Extracellular segment spans residues 259–271 (YVRPPSEKSVEES). Residues 272–292 (KIIAVFYTFLSPMLNPLIYSL) form a helical membrane-spanning segment. Residues 293–315 (RNRDVILAIQQMIRGKSFCKIAV) lie on the Cytoplasmic side of the membrane.

Belongs to the G-protein coupled receptor 1 family.

Its subcellular location is the cell membrane. Functionally, odorant receptor. The polypeptide is Olfactory receptor 5M10 (OR5M10) (Homo sapiens (Human)).